Consider the following 245-residue polypeptide: Nicotinamide/nicotinic acid mononucleotide adenylyltransferase 3 (245 aa).

NAD(+) contacts are provided by serine 14 and phenylalanine 15. Histidine 22 and lysine 56 together coordinate ATP. NAD(+) is bound by residues tryptophan 90, threonine 93, glycine 134, and aspartate 136. ATP is bound at residue lysine 139. The NAD(+) site is built by leucine 146, tryptophan 147, arginine 166, and asparagine 197. Position 202-205 (202-205 (TYVR)) interacts with ATP.

This sequence belongs to the eukaryotic NMN adenylyltransferase family. In terms of assembly, homotetramer. Mg(2+) is required as a cofactor.

It is found in the mitochondrion. The catalysed reaction is beta-nicotinamide D-ribonucleotide + ATP + H(+) = diphosphate + NAD(+). It catalyses the reaction nicotinate beta-D-ribonucleotide + ATP + H(+) = deamido-NAD(+) + diphosphate. Its pathway is cofactor biosynthesis; NAD(+) biosynthesis; NAD(+) from nicotinamide D-ribonucleotide: step 1/1. It functions in the pathway cofactor biosynthesis; NAD(+) biosynthesis; deamido-NAD(+) from nicotinate D-ribonucleotide: step 1/1. Activity is strongly inhibited by galotannin. Inhibited by P1-(adenosine-5')-P4-(nicotinic-acid-riboside-5')-tetraphosphate (Nap4AD). Its function is as follows. Catalyzes the formation of NAD(+) from nicotinamide mononucleotide (NMN) and ATP. Can also use the deamidated form; nicotinic acid mononucleotide (NaMN) as substrate with the same efficiency. Can use triazofurin monophosphate (TrMP) as substrate. Can also use GTP and ITP as nucleotide donors. Also catalyzes the reverse reaction, i.e. the pyrophosphorolytic cleavage of NAD(+). For the pyrophosphorolytic activity, can use NAD(+), NADH, NaAD, nicotinic acid adenine dinucleotide phosphate (NHD), nicotinamide guanine dinucleotide (NGD) as substrates. Fails to cleave phosphorylated dinucleotides NADP(+), NADPH and NaADP(+). Protects against axonal degeneration following injury. May be involved in the maintenance of axonal integrity. Also functions as a stress-response chaperone protein that prevents toxic aggregation of proteins; this function may be independent of its NAD(+) synthesis activity. The sequence is that of Nicotinamide/nicotinic acid mononucleotide adenylyltransferase 3 from Mus musculus (Mouse).